We begin with the raw amino-acid sequence, 206 residues long: Ribosomal RNA small subunit methyltransferase G (206 aa).

S-adenosyl-L-methionine-binding positions include glycine 74, leucine 79, valine 125–glutamate 126, and arginine 140.

It belongs to the methyltransferase superfamily. RNA methyltransferase RsmG family.

The protein resides in the cytoplasm. It carries out the reaction guanosine(527) in 16S rRNA + S-adenosyl-L-methionine = N(7)-methylguanosine(527) in 16S rRNA + S-adenosyl-L-homocysteine. In terms of biological role, specifically methylates the N7 position of guanine in position 527 of 16S rRNA. The protein is Ribosomal RNA small subunit methyltransferase G of Shewanella woodyi (strain ATCC 51908 / MS32).